The sequence spans 405 residues: MDTKAFKRSLHSSNQYHRKGFGHEAEVTEMLRFEYQSSLIQQIRENGNRFQRGEVTIQLAEAFGFCWGVERAVALAYETRQHFPTERIWITNEIIHNPSVNQNLREMQVEFIPVDEQGQKDFSVVAGEDVVILPAFGASVQEMQLLNDKGCKIMDTTCPWVSKVWNSVEKHKKGSYTSIIHGKYQHEETIATSSYAATYLIVLDLKEAEYVCNYILNGGDREEFLHKFRHAYSPDFDPDRDLVRVGIANQTTMLKGETEQIGKLFERTLMRKYGPDQINQHFLSFNTICDATQERQDAMFKLVEYPLDLMVVIGGFNSSNTTHLQEISIEREIPSYHIDSADRIGPGNRVEHKPLHRPLEIKENWLPEGPIVVGITSGASTPDKVVSDVLEKIFALKSTSPALIP.

Cys-66 is a binding site for [4Fe-4S] cluster. (2E)-4-hydroxy-3-methylbut-2-enyl diphosphate is bound at residue His-96. Residue His-96 coordinates dimethylallyl diphosphate. His-96 serves as a coordination point for isopentenyl diphosphate. Cys-158 serves as a coordination point for [4Fe-4S] cluster. A (2E)-4-hydroxy-3-methylbut-2-enyl diphosphate-binding site is contributed by His-186. Residue His-186 coordinates dimethylallyl diphosphate. His-186 is an isopentenyl diphosphate binding site. Residue Glu-188 is the Proton donor of the active site. Thr-251 serves as a coordination point for (2E)-4-hydroxy-3-methylbut-2-enyl diphosphate. Cys-289 contributes to the [4Fe-4S] cluster binding site. Residues Ser-318, Ser-319, Asn-320, and Ser-380 each coordinate (2E)-4-hydroxy-3-methylbut-2-enyl diphosphate. Dimethylallyl diphosphate-binding residues include Ser-318, Ser-319, Asn-320, and Ser-380. Positions 318, 319, 320, and 380 each coordinate isopentenyl diphosphate.

The protein belongs to the IspH family. [4Fe-4S] cluster is required as a cofactor.

The catalysed reaction is isopentenyl diphosphate + 2 oxidized [2Fe-2S]-[ferredoxin] + H2O = (2E)-4-hydroxy-3-methylbut-2-enyl diphosphate + 2 reduced [2Fe-2S]-[ferredoxin] + 2 H(+). It carries out the reaction dimethylallyl diphosphate + 2 oxidized [2Fe-2S]-[ferredoxin] + H2O = (2E)-4-hydroxy-3-methylbut-2-enyl diphosphate + 2 reduced [2Fe-2S]-[ferredoxin] + 2 H(+). Its pathway is isoprenoid biosynthesis; dimethylallyl diphosphate biosynthesis; dimethylallyl diphosphate from (2E)-4-hydroxy-3-methylbutenyl diphosphate: step 1/1. It functions in the pathway isoprenoid biosynthesis; isopentenyl diphosphate biosynthesis via DXP pathway; isopentenyl diphosphate from 1-deoxy-D-xylulose 5-phosphate: step 6/6. Functionally, catalyzes the conversion of 1-hydroxy-2-methyl-2-(E)-butenyl 4-diphosphate (HMBPP) into a mixture of isopentenyl diphosphate (IPP) and dimethylallyl diphosphate (DMAPP). Acts in the terminal step of the DOXP/MEP pathway for isoprenoid precursor biosynthesis. The chain is 4-hydroxy-3-methylbut-2-enyl diphosphate reductase from Cyanothece sp. (strain PCC 7425 / ATCC 29141).